The sequence spans 279 residues: Membrane protein insertase YidC (279 aa).

Residues 1–22 form the signal peptide; that stretch reads MKHLKRNMALLSVAALSFILTA. Cys23 is lipidated: N-palmitoyl cysteine. Residue Cys23 is the site of S-diacylglycerol cysteine attachment. A run of 5 helical transmembrane segments spans residues 35–55, 59–79, 129–149, 170–190, and 210–230; these read IWDGVIVYNFSRFIIYLSKLF, YGWGIIVFTIIIRIIILPLMI, MAGCLPLIIQLPVMYALYAAV, PYFILPILAALFTFMSTWLSM, and PLVILITALNFPAAITLYWVV. Positions 253 to 268 are enriched in basic and acidic residues; the sequence is EEKIQTEKAKRKAIEK. Residues 253-279 are disordered; that stretch reads EEKIQTEKAKRKAIEKAKRRAMKSKRK. A compositionally biased stretch (basic residues) spans 269 to 279; the sequence is AKRRAMKSKRK.

Belongs to the OXA1/ALB3/YidC family. Type 2 subfamily.

Its subcellular location is the cell membrane. Functionally, required for the insertion and/or proper folding and/or complex formation of integral membrane proteins into the membrane. Involved in integration of membrane proteins that insert both dependently and independently of the Sec translocase complex, as well as at least some lipoproteins. This is Membrane protein insertase YidC from Pediococcus pentosaceus (strain ATCC 25745 / CCUG 21536 / LMG 10740 / 183-1w).